Here is a 249-residue protein sequence, read N- to C-terminus: MRLLLTNDDGVNSKGIYTLAKELQKEHEIIIAAPSIEMSAKSHSITIAKPLFIKEVELDDINATTYSISGTPADCVKVAMDKILDKPVDMVISGINYGTNLGIDILYSGTVSAAIEAAIHNIPSIAMSAEVKNGDINFDTAASIARELVKISQENSMKGNLVLNVNVPCLDKDSLKGLKVCQMGGRTFTSYFEKIEKNKEVSYMLKGELTNNHKPTTDIHFLRKGYTTITPLHYDLTNFKIMNDVSNWF.

Positions 8, 9, 39, and 96 each coordinate a divalent metal cation.

The protein belongs to the SurE nucleotidase family. The cofactor is a divalent metal cation.

It localises to the cytoplasm. It catalyses the reaction a ribonucleoside 5'-phosphate + H2O = a ribonucleoside + phosphate. In terms of biological role, nucleotidase that shows phosphatase activity on nucleoside 5'-monophosphates. This is 5'-nucleotidase SurE from Clostridium tetani (strain Massachusetts / E88).